The primary structure comprises 112 residues: Prothymosin alpha-B (112 aa).

The segment at 1-112 (MSDTAVDASV…TKKQKTDEDD (112 aa)) is disordered. The span at 9–35 (SVEKSTKDLKAKEKEVVEEAENGKDKP) shows a compositional bias: basic and acidic residues. Acidic residues-rich tracts occupy residues 41–83 (ENEE…DEVE) and 92–101 (EDDEDDDDDV). Positions 102–112 (ETKKQKTDEDD) are enriched in basic and acidic residues.

It belongs to the pro/parathymosin family.

It localises to the nucleus. The protein is Prothymosin alpha-B (ptma-b) of Xenopus laevis (African clawed frog).